The following is a 211-amino-acid chain: Degradation in the endoplasmic reticulum protein 1 (211 aa).

N-acetylmethionine is present on M1. At 1–14 the chain is on the cytoplasmic side; it reads MDAVILNLLGDIPL. Residues 15-32 form a helical membrane-spanning segment; sequence VTRLWTIGCLVLSGLTSL. The Lumenal segment spans residues 33–67; the sequence is RIVDPGKVVYSYDLVFKKGQYGRLLYSIFDYGAFN. The helical transmembrane segment at 68-85 threads the bilayer; the sequence is WISMINIFVSANHLSTLE. Over 86 to 92 the chain is Cytoplasmic; the sequence is NSFNLRR. The helical transmembrane segment at 93-109 threads the bilayer; the sequence is KFCWIIFLLLVILVKMT. The Lumenal portion of the chain corresponds to 110 to 117; the sequence is SIEQPAAS. A helical transmembrane segment spans residues 118–133; it reads LGVLLHENLVYYELKK. At 134 to 149 the chain is on the cytoplasmic side; the sequence is NGNQMNVRFFGAIDVS. A helical transmembrane segment spans residues 150–165; the sequence is PSIFPIYMNAVMYFVY. The Lumenal segment spans residues 166–168; the sequence is KRS. Residues 169–189 form a helical membrane-spanning segment; the sequence is WLEIAMNFMPGHVIYYMDDII. Over 190–211 the chain is Cytoplasmic; the sequence is GKIYGIDLCKSPYDWFRNTETP.

The protein belongs to the derlin family. In terms of assembly, component of the HRD1 ubiquitin ligase complex which contains the E3 ligase HRD1, its cofactors HRD3, USA1 and DER1, substrate recruiting factor YOS9 and CDC48-binding protein UBX2. Within the complex, interacts with USA1 (via C-terminus). In ERAD-L, HRD3 and YOS9 jointly bind misfolded glycoproteins in the endoplasmic reticulum (ER) lumen. Movement of ERAD-L substrates through the ER membrane is facilitated by HRD1 and DER1 which have lateral gates facing each other and which distort the membrane region between the lateral gates, making it much thinner than a normal phospholipid bilayer. Substrates insert into the membrane as a hairpin loop with one strand interacting with DER1 and the other with HRD1. The HRD1 complex interacts with the heterotrimeric CDC48-NPL4-UFD1 ATPase complex which is recruited by UBX2 via its interaction with CDC48 and which moves ubiquitinated substrates to the cytosol for targeting to the proteasome. In terms of processing, N-terminally acetylated by acetyltransferase NatB which enhances DER1 stability and is required for ERAD-L function.

It is found in the endoplasmic reticulum membrane. In terms of biological role, component of the endoplasmic reticulum-associated degradation (ERAD) pathway. Specifically required for the ERAD-L pathway which mediates the degradation of proteins with misfolded lumenal domains within the endoplasmic reticulum (ER). Facilitates retrotranslocation of misfolded proteins from the ER lumen through the ER membrane in conjunction with HRD1. Both proteins have lateral gates facing each other and distort the membrane region between the lateral gates, making it much thinner than a normal phospholipid bilayer. Substrates insert into the membrane as a hairpin loop with one strand interacting with DER1 and the other with HRD1. The protein is Degradation in the endoplasmic reticulum protein 1 (DER1) of Saccharomyces cerevisiae (strain ATCC 204508 / S288c) (Baker's yeast).